The sequence spans 878 residues: uncharacterized protein (878 aa).

4 disordered regions span residues 58–223, 306–494, 585–652, and 679–709; these read IGVD…RTKF, KGRL…TSSR, KLLE…SGKL, and PSSMVTIPSPSSSCSSTSSIIGSSSSSGGGG. 3 stretches are compositionally biased toward low complexity: residues 64–213, 314–325, and 335–355; these read NGNS…SGTS, SNSSQSSDSDYS, and IPNSTLSSSSTLPIPSNPNSN. Residues 362-372 are compositionally biased toward polar residues; it reads RNPNQLSSTNV. The span at 373–494 shows a compositional bias: low complexity; that stretch reads NNNINNSGGS…TPTTPVTSSR (122 aa). Basic and acidic residues predominate over residues 585 to 595; that stretch reads KLLEQQKEQQQ. The segment covering 596–605 has biased composition (low complexity); that stretch reads KEQQQQQKQQ. The span at 615–624 shows a compositional bias: acidic residues; it reads TDDEDEDDDE. Low complexity-rich tracts occupy residues 639–652 and 679–704; these read NLSNNSSNKGSGKL and PSSMVTIPSPSSSCSSTSSIIGSSSS.

This is an uncharacterized protein from Dictyostelium discoideum (Social amoeba).